The sequence spans 160 residues: MNLKILGIDPGSRNCGYAIIEANKGKNILIEAGLIKIKPSTLQYQITELCEGLDLIFKNHSFDEVAIEDIFFAYNPKTVLKLAQFRGALSLKILQIHGDFAEYTPLQVKKAVTGKAKATKEQVAFMVKRLLGLSKDIKPLDITDAIAVALTHAANLRVRV.

Active-site residues include D9, E68, and D141. 3 residues coordinate Mg(2+): D9, E68, and D141.

This sequence belongs to the RuvC family. In terms of assembly, homodimer which binds Holliday junction (HJ) DNA. The HJ becomes 2-fold symmetrical on binding to RuvC with unstacked arms; it has a different conformation from HJ DNA in complex with RuvA. In the full resolvosome a probable DNA-RuvA(4)-RuvB(12)-RuvC(2) complex forms which resolves the HJ. Mg(2+) serves as cofactor.

The protein localises to the cytoplasm. It carries out the reaction Endonucleolytic cleavage at a junction such as a reciprocal single-stranded crossover between two homologous DNA duplexes (Holliday junction).. In terms of biological role, the RuvA-RuvB-RuvC complex processes Holliday junction (HJ) DNA during genetic recombination and DNA repair. Endonuclease that resolves HJ intermediates. Cleaves cruciform DNA by making single-stranded nicks across the HJ at symmetrical positions within the homologous arms, yielding a 5'-phosphate and a 3'-hydroxyl group; requires a central core of homology in the junction. The consensus cleavage sequence is 5'-(A/T)TT(C/G)-3'. Cleavage occurs on the 3'-side of the TT dinucleotide at the point of strand exchange. HJ branch migration catalyzed by RuvA-RuvB allows RuvC to scan DNA until it finds its consensus sequence, where it cleaves and resolves the cruciform DNA. The polypeptide is Crossover junction endodeoxyribonuclease RuvC (Campylobacter jejuni (strain RM1221)).